Reading from the N-terminus, the 174-residue chain is Ribulose bisphosphate carboxylase small subunit, chloroplastic 1 (174 aa).

Residues 1-45 constitute a chloroplast transit peptide; it reads MAPAVMASSATTVAPFQGLKSTAGLPVSRRSRGSLGSVSNGGRIR.

The protein belongs to the RuBisCO small chain family. As to quaternary structure, heterohexadecamer of 8 large and 8 small subunits.

The protein resides in the plastid. Its subcellular location is the chloroplast. Its function is as follows. RuBisCO catalyzes two reactions: the carboxylation of D-ribulose 1,5-bisphosphate, the primary event in carbon dioxide fixation, as well as the oxidative fragmentation of the pentose substrate. Both reactions occur simultaneously and in competition at the same active site. Although the small subunit is not catalytic it is essential for maximal activity. The polypeptide is Ribulose bisphosphate carboxylase small subunit, chloroplastic 1 (Triticum aestivum (Wheat)).